The following is a 305-amino-acid chain: Tetraspanin-12 (305 aa).

Residues 1-12 (MAREDSVKCLRC) are Cytoplasmic-facing. Residues Cys-9 and Cys-12 are each lipidated (S-palmitoyl cysteine). Residues 13–33 (LLYALNLLFWLMSISVLAVSA) form a helical membrane-spanning segment. Residues 34 to 59 (WMRDYLNNVLTLTAETRVEEAVILTY) lie on the Extracellular side of the membrane. The helical transmembrane segment at 60–80 (FPVVHPVMIAVCCFLIIVGML) threads the bilayer. At 81–89 (GYCGTVKRN) the chain is on the cytoplasmic side. Cys-83 carries S-palmitoyl cysteine lipidation. A helical transmembrane segment spans residues 90–110 (LLLLAWYFGSLLVIFCVELAC). Topologically, residues 111 to 224 (GVWTYEQEIM…RGTKQLQVLR (114 aa)) are extracellular. The chain crosses the membrane as a helical span at residues 225-245 (FLGISIGVTQILAMILTITLL). Topologically, residues 246 to 305 (WALYYDRREPGTDQMMALKNDTTQHLPCHSVELLKPSLSRIFEHTSMANSFNTHFEMEEL) are cytoplasmic.

This sequence belongs to the tetraspanin (TM4SF) family. In terms of assembly, component of a complex, at least composed of TSPAN12, FZD4 and norrin (NDP). Interacts (when palmitoylated) with ADAM10. Interacts with MMP14/MT1-MMP. Palmitoylated; required for interaction with ADAM10. The precise position of palmitoylated residues is unclear and occurs either on Cys-9, Cys-12 and/or Cys-83.

The protein localises to the cell membrane. In terms of biological role, regulator of cell surface receptor signal transduction. Plays a central role in retinal vascularization by regulating norrin (NDP) signal transduction. Acts in concert with norrin (NDP) to promote FZD4 multimerization and subsequent activation of FZD4, leading to promote accumulation of beta-catenin (CTNNB1) and stimulate LEF/TCF-mediated transcriptional programs. Suprisingly, it only activates the norrin (NDP)-dependent activation of FZD4, while it does not activate the Wnt-dependent activation of FZD4, suggesting the existence of a Wnt-independent signaling that also promote accumulation the beta-catenin (CTNNB1). Acts as a regulator of membrane proteinases such as ADAM10 and MMP14/MT1-MMP. Activates ADAM10-dependent cleavage activity of amyloid precursor protein (APP). Activates MMP14/MT1-MMP-dependent cleavage activity. This Bos taurus (Bovine) protein is Tetraspanin-12 (TSPAN12).